A 272-amino-acid polypeptide reads, in one-letter code: Lectin-like protein At1g53070 (272 aa).

The signal sequence occupies residues 1–23; that stretch reads MKIQILCFTTLFLAIFTSQVTTA. Positions 24 to 271 are legume-lectin like; that stretch reads YKFKFDYFGN…RHEIWDWTFQ (248 aa). Residues N33, N84, and N134 are each glycosylated (N-linked (GlcNAc...) asparagine). Position 241 is a phosphoserine (S241).

This sequence belongs to the leguminous lectin family.

It localises to the secreted. It is found in the extracellular space. Its subcellular location is the apoplast. This Arabidopsis thaliana (Mouse-ear cress) protein is Lectin-like protein At1g53070.